A 488-amino-acid polypeptide reads, in one-letter code: L-amino oxidase (488 aa).

FAD contacts are provided by residues 60–61, 80–81, Arg-88, and 104–107; these read MS, EA, and GPMR. Substrate is bound by residues Arg-107 and Tyr-388. Cys-347 and Cys-428 form a disulfide bridge. FAD is bound by residues Glu-474 and 481-486; that span reads GWIDST. 481–482 serves as a coordination point for substrate; that stretch reads GW.

Belongs to the flavin monoamine oxidase family. FIG1 subfamily. In terms of assembly, monomer. This is in contrast with most of its orthologs, that are non-covalently linked homodimers. FAD serves as cofactor. In terms of processing, N-glycosylated. Expressed by the venom gland.

The protein localises to the secreted. The catalysed reaction is an L-alpha-amino acid + O2 + H2O = a 2-oxocarboxylate + H2O2 + NH4(+). It carries out the reaction L-leucine + O2 + H2O = 4-methyl-2-oxopentanoate + H2O2 + NH4(+). Its function is as follows. Catalyzes an oxidative deamination of predominantly hydrophobic and aromatic L-amino acids, thus producing hydrogen peroxide that may contribute to the diverse toxic effects of this enzyme. Shows activity on L-Leu. Exhibits diverse biological activities, such as hemorrhage, hemolysis, edema, antibacterial and antiparasitic activities, as well as regulation of platelet aggregation. When tested on SW480 and SW620 human colon cancer cells, shows inhibition of cell proliferation, and induction of apoptosis, which is probably a consequence of the increased caspase-3 activity and the decreased Bcl-2 expression. The sequence is that of L-amino oxidase from Trimeresurus purpureomaculatus (Mangrove pit viper).